The primary structure comprises 203 residues: Dephospho-CoA kinase (203 aa).

Residues Ile-10–Gly-203 form the DPCK domain. Gly-18–Thr-23 is an ATP binding site.

It belongs to the CoaE family.

It localises to the cytoplasm. The enzyme catalyses 3'-dephospho-CoA + ATP = ADP + CoA + H(+). It participates in cofactor biosynthesis; coenzyme A biosynthesis; CoA from (R)-pantothenate: step 5/5. Functionally, catalyzes the phosphorylation of the 3'-hydroxyl group of dephosphocoenzyme A to form coenzyme A. The polypeptide is Dephospho-CoA kinase (Thermus thermophilus (strain ATCC BAA-163 / DSM 7039 / HB27)).